A 24-amino-acid chain; its full sequence is Brevinin-1Pd (24 aa).

A disulfide bridge links cysteine 18 with cysteine 24.

In terms of tissue distribution, expressed by the skin glands.

It is found in the secreted. In terms of biological role, antibacterial activity against Gram-positive bacterium S.aureus and Gram-negative bacterium E.coli. Has activity against C.albicans. In Lithobates pipiens (Northern leopard frog), this protein is Brevinin-1Pd.